Here is a 637-residue protein sequence, read N- to C-terminus: Zinc finger protein rsv2 (637 aa).

6 disordered regions span residues 1 to 41 (MDTT…SKMN), 145 to 164 (SNHQFITTPPVNGSNEPTSA), 169 to 207 (IITANSSPSGNAGSNASASMSVPPPLTPSASTINDQPFS), 221 to 363 (TGAI…STAL), 404 to 427 (QDSFNKESIKQRIPSLSPPITRSY), and 440 to 558 (SVNP…GAQR). Low complexity predominate over residues 172-189 (ANSSPSGNAGSNASASMS). The segment covering 196–207 (PSASTINDQPFS) has biased composition (polar residues). Residues 279-296 (SDLKRSLGHNQKSDRVSK) are compositionally biased toward basic and acidic residues. Over residues 298–344 (VSPQHQANPSTLNNPLKTQNFDSSKNLYTDNKDSSLVSPTGLQSRME) the composition is skewed to polar residues. Composition is skewed to basic and acidic residues over residues 345–355 (QNPEVRAHPMK) and 404–413 (QDSFNKESIK). Low complexity predominate over residues 455 to 471 (VPSNTTISSSPPLTSPV). Polar residues-rich tracts occupy residues 472–498 (KTSANIPNLLPTSELDSSNAPHSQSAA) and 508–527 (YYNTRSSHSVVPNPTNQKVS). The segment covering 544-554 (TTPTNSSTTAT) has biased composition (low complexity). The C2H2-type 1 zinc finger occupies 572–603 (VRCTLQNRVTGEICNTVFSRTYDLIRHQDTIH). Residues 610-635 (FRCEICGDQRHFSRHDALVRHLRVKH) form a C2H2-type 2; degenerate zinc finger.

The protein resides in the nucleus. The polypeptide is Zinc finger protein rsv2 (rsv2) (Schizosaccharomyces pombe (strain 972 / ATCC 24843) (Fission yeast)).